The chain runs to 432 residues: Adenosylhomocysteinase (432 aa).

The segment at 1 to 24 is disordered; that stretch reads MSAYSPLSAQLDADTDVDVESTRT. Substrate is bound by residues D137 and E162. Residue 163-165 participates in NAD(+) binding; it reads TTT. Substrate is bound by residues K192 and D196. NAD(+)-binding positions include N197, 226–231, E249, N284, 305–307, and N352; these read GYGYCG and AGH.

Belongs to the adenosylhomocysteinase family. NAD(+) is required as a cofactor.

The protein resides in the cytoplasm. The catalysed reaction is S-adenosyl-L-homocysteine + H2O = L-homocysteine + adenosine. It participates in amino-acid biosynthesis; L-homocysteine biosynthesis; L-homocysteine from S-adenosyl-L-homocysteine: step 1/1. Its function is as follows. May play a key role in the regulation of the intracellular concentration of adenosylhomocysteine. This is Adenosylhomocysteinase from Haloquadratum walsbyi (strain DSM 16790 / HBSQ001).